The primary structure comprises 370 residues: Protein-tyrosine sulfotransferase 1 (370 aa).

At 1–8 the chain is on the cytoplasmic side; that stretch reads MVGKLKQN. The helical; Signal-anchor for type II membrane protein transmembrane segment at 9-25 threads the bilayer; sequence LLLACLVISSVTVFYLG. Over 26–370 the chain is Lumenal; it reads QHAMECHHRI…KEKPQTEQVE (345 aa). Asn60 is a glycosylation site (N-linked (GlcNAc...) asparagine). 79–83 is a binding site for 3'-phosphoadenylyl sulfate; sequence RSGTT. A disulfide bridge connects residues Cys97 and Cys157. The Proton donor/acceptor role is filled by Glu100. The interaction with peptide substrate stretch occupies residues 102–106; that stretch reads RVIPR. The 3'-phosphoadenylyl sulfate site is built by Arg184, Ser192, and Arg196. Residues Cys226 and Cys234 are joined by a disulfide bond. Tyr239 is a binding site for 3'-phosphoadenylyl sulfate. Asn262 is a glycosylation site (N-linked (GlcNAc...) asparagine). 3'-phosphoadenylyl sulfate contacts are provided by residues 286–295 and Lys301; that span reads STDQVIKPVN.

Belongs to the protein sulfotransferase family. Homodimer. Can also form heterodimers with TPST2. N-glycosylated.

The protein resides in the golgi apparatus membrane. The enzyme catalyses L-tyrosyl-[protein] + 3'-phosphoadenylyl sulfate = O-sulfo-L-tyrosine-[protein] + adenosine 3',5'-bisphosphate + H(+). In terms of biological role, catalyzes the O-sulfation of tyrosine residues within acidic motifs of polypeptides, using 3'-phosphoadenylyl sulfate (PAPS) as cosubstrate. The polypeptide is Protein-tyrosine sulfotransferase 1 (Tpst1) (Rattus norvegicus (Rat)).